The following is a 485-amino-acid chain: Glycogen synthase (485 aa).

Lys17 lines the ADP-alpha-D-glucose pocket.

It belongs to the glycosyltransferase 1 family. Bacterial/plant glycogen synthase subfamily.

The enzyme catalyses [(1-&gt;4)-alpha-D-glucosyl](n) + ADP-alpha-D-glucose = [(1-&gt;4)-alpha-D-glucosyl](n+1) + ADP + H(+). The protein operates within glycan biosynthesis; glycogen biosynthesis. Its function is as follows. Synthesizes alpha-1,4-glucan chains using ADP-glucose. This Novosphingobium aromaticivorans (strain ATCC 700278 / DSM 12444 / CCUG 56034 / CIP 105152 / NBRC 16084 / F199) protein is Glycogen synthase.